A 245-amino-acid chain; its full sequence is Ribonuclease 3 (245 aa).

Positions 18–146 constitute an RNase III domain; the sequence is LSEFLENLSI…FVGAIYLDSG (129 aa). E59 contributes to the Mg(2+) binding site. D63 is a catalytic residue. 2 residues coordinate Mg(2+): D132 and E135. The active site involves E135. The DRBM domain maps to 173–242; it reads DYKSLLQEYV…AEVALKAMED (70 aa).

This sequence belongs to the ribonuclease III family. As to quaternary structure, homodimer. Mg(2+) serves as cofactor.

The protein resides in the cytoplasm. It carries out the reaction Endonucleolytic cleavage to 5'-phosphomonoester.. Functionally, digests double-stranded RNA. Involved in the processing of primary rRNA transcript to yield the immediate precursors to the large and small rRNAs (23S and 16S). Processes some mRNAs, and tRNAs when they are encoded in the rRNA operon. Processes pre-crRNA and tracrRNA of type II CRISPR loci if present in the organism. The sequence is that of Ribonuclease 3 from Borreliella afzelii (strain PKo) (Borrelia afzelii).